The sequence spans 427 residues: Histidinol dehydrogenase (427 aa).

The NAD(+) site is built by Y123, Q185, and N208. The substrate site is built by S231, Q253, and H256. 2 residues coordinate Zn(2+): Q253 and H256. Residues E321 and H322 each act as proton acceptor in the active site. Residues H322, D355, E409, and H414 each coordinate substrate. D355 lines the Zn(2+) pocket. H414 is a Zn(2+) binding site.

Belongs to the histidinol dehydrogenase family. Zn(2+) is required as a cofactor.

It catalyses the reaction L-histidinol + 2 NAD(+) + H2O = L-histidine + 2 NADH + 3 H(+). It functions in the pathway amino-acid biosynthesis; L-histidine biosynthesis; L-histidine from 5-phospho-alpha-D-ribose 1-diphosphate: step 9/9. Functionally, catalyzes the sequential NAD-dependent oxidations of L-histidinol to L-histidinaldehyde and then to L-histidine. The sequence is that of Histidinol dehydrogenase from Oceanobacillus iheyensis (strain DSM 14371 / CIP 107618 / JCM 11309 / KCTC 3954 / HTE831).